Consider the following 271-residue polypeptide: Dermonecrotic toxin LhSicTox-alphaIA2bv (271 aa).

Histidine 3 is an active-site residue. 2 residues coordinate Mg(2+): glutamate 23 and aspartate 25. 2 disulfide bridges follow: cysteine 43–cysteine 49 and cysteine 45–cysteine 188. Aspartate 83 provides a ligand contact to Mg(2+).

This sequence belongs to the arthropod phospholipase D family. Class II subfamily. It depends on Mg(2+) as a cofactor. In terms of tissue distribution, expressed by the venom gland.

It is found in the secreted. The enzyme catalyses an N-(acyl)-sphingosylphosphocholine = an N-(acyl)-sphingosyl-1,3-cyclic phosphate + choline. It carries out the reaction an N-(acyl)-sphingosylphosphoethanolamine = an N-(acyl)-sphingosyl-1,3-cyclic phosphate + ethanolamine. The catalysed reaction is a 1-acyl-sn-glycero-3-phosphocholine = a 1-acyl-sn-glycero-2,3-cyclic phosphate + choline. It catalyses the reaction a 1-acyl-sn-glycero-3-phosphoethanolamine = a 1-acyl-sn-glycero-2,3-cyclic phosphate + ethanolamine. Dermonecrotic toxins cleave the phosphodiester linkage between the phosphate and headgroup of certain phospholipids (sphingolipid and lysolipid substrates), forming an alcohol (often choline) and a cyclic phosphate. This toxin acts on sphingomyelin (SM). It may also act on ceramide phosphoethanolamine (CPE), lysophosphatidylcholine (LPC) and lysophosphatidylethanolamine (LPE), but not on lysophosphatidylserine (LPS), and lysophosphatidylglycerol (LPG). It acts by transphosphatidylation, releasing exclusively cyclic phosphate products as second products. Induces dermonecrosis, hemolysis, increased vascular permeability, edema, inflammatory response, and platelet aggregation. The polypeptide is Dermonecrotic toxin LhSicTox-alphaIA2bv (Loxosceles hirsuta (Recluse spider)).